The following is a 309-amino-acid chain: Cytidine deaminase (309 aa).

2 CMP/dCMP-type deaminase domains span residues 48 to 168 (DEDA…FGPR) and 200 to 309 (DDND…SLSL). Substrate is bound at residue 89–91 (NME). Position 102 (His-102) interacts with Zn(2+). Glu-104 functions as the Proton donor in the catalytic mechanism. Positions 129 and 132 each coordinate Zn(2+).

Belongs to the cytidine and deoxycytidylate deaminase family. Homodimer. It depends on Zn(2+) as a cofactor.

The enzyme catalyses cytidine + H2O + H(+) = uridine + NH4(+). It catalyses the reaction 2'-deoxycytidine + H2O + H(+) = 2'-deoxyuridine + NH4(+). This enzyme scavenges exogenous and endogenous cytidine and 2'-deoxycytidine for UMP synthesis. The protein is Cytidine deaminase of Sodalis glossinidius (strain morsitans).